Here is a 55-residue protein sequence, read N- to C-terminus: Large ribosomal subunit protein bL33A (55 aa).

It belongs to the bacterial ribosomal protein bL33 family.

This chain is Large ribosomal subunit protein bL33A, found in Rhodococcus jostii (strain RHA1).